The following is a 64-amino-acid chain: Protein translocase subunit SecE (64 aa).

The helical transmembrane segment at L35–I55 threads the bilayer.

Belongs to the SecE/SEC61-gamma family. Component of the Sec protein translocase complex. Heterotrimer consisting of SecY, SecE and SecG subunits. The heterotrimers can form oligomers, although 1 heterotrimer is thought to be able to translocate proteins. Interacts with the ribosome. Interacts with SecDF, and other proteins may be involved. Interacts with SecA.

It localises to the cell membrane. Functionally, essential subunit of the Sec protein translocation channel SecYEG. Clamps together the 2 halves of SecY. May contact the channel plug during translocation. The protein is Protein translocase subunit SecE of Halalkalibacterium halodurans (strain ATCC BAA-125 / DSM 18197 / FERM 7344 / JCM 9153 / C-125) (Bacillus halodurans).